Here is a 110-residue protein sequence, read N- to C-terminus: UPF0060 membrane protein Noc_2955 (110 aa).

Helical transmembrane passes span 7 to 27, 33 to 53, 63 to 83, and 87 to 107; these read VGLF…AYLW, TIWL…LLSL, AAYG…VNGI, and TWDL…MFAP.

This sequence belongs to the UPF0060 family.

It is found in the cell inner membrane. This Nitrosococcus oceani (strain ATCC 19707 / BCRC 17464 / JCM 30415 / NCIMB 11848 / C-107) protein is UPF0060 membrane protein Noc_2955.